The chain runs to 180 residues: Inner membrane assembly complex subunit 17 (180 aa).

A mitochondrion-targeting transit peptide spans 1-36 (MMIRNQLYRKCIIGGGRSILNGWVINGTVPNIGLRY). Residues 37–105 (LRSGIVTRSN…RKTQDIPIKR (69 aa)) are Mitochondrial matrix-facing. Residues 106–128 (FIRPTWMFLLMSSTFYLLGHYIW) traverse the membrane as a helical segment. A coiled-coil region spans residues 129 to 163 (WKLEYDEVEKELDRQVTALEEELHNLIEEHRVHGE). Topologically, residues 129-180 (WKLEYDEVEKELDRQVTALEEELHNLIEEHRVHGENEAIKNKKHKHWYKFWS) are mitochondrial intermembrane.

Belongs to the INA17 family. In terms of assembly, component of the inner membrane assembly (INA) complex, composed of INA17 and INA22. Interacts with a subset of F(1)F(0)-ATP synthase subunits of the F(1)-domain and the peripheral stalk.

It is found in the mitochondrion inner membrane. Its function is as follows. Component of the INA complex (INAC) that promotes the biogenesis of mitochondrial F(1)F(0)-ATP synthase. INAC facilitates the assembly of the peripheral stalk and promotes the assembly of the catalytic F(1)-domain with the membrane-embedded F(0)-domain. In Vanderwaltozyma polyspora (strain ATCC 22028 / DSM 70294 / BCRC 21397 / CBS 2163 / NBRC 10782 / NRRL Y-8283 / UCD 57-17) (Kluyveromyces polysporus), this protein is Inner membrane assembly complex subunit 17.